The chain runs to 431 residues: Glucose-1-phosphate adenylyltransferase (431 aa).

Alpha-D-glucose 1-phosphate is bound by residues Gly-163, Glu-178–Lys-179, and Ser-210.

This sequence belongs to the bacterial/plant glucose-1-phosphate adenylyltransferase family. Homotetramer.

The enzyme catalyses alpha-D-glucose 1-phosphate + ATP + H(+) = ADP-alpha-D-glucose + diphosphate. It functions in the pathway glycan biosynthesis; glycogen biosynthesis. Involved in the biosynthesis of ADP-glucose, a building block required for the elongation reactions to produce glycogen. Catalyzes the reaction between ATP and alpha-D-glucose 1-phosphate (G1P) to produce pyrophosphate and ADP-Glc. This is Glucose-1-phosphate adenylyltransferase from Synechococcus sp. (strain WH7803).